We begin with the raw amino-acid sequence, 532 residues long: 2,3-bisphosphoglycerate-independent phosphoglycerate mutase (532 aa).

Mn(2+) contacts are provided by Asp-15 and Ser-65. Ser-65 functions as the Phosphoserine intermediate in the catalytic mechanism. Residues His-126, 156-157, Arg-188, Arg-194, 258-261, and Lys-331 contribute to the substrate site; these read RD and RPDR. 5 residues coordinate Mn(2+): Asp-398, His-402, Asp-439, His-440, and His-457.

Belongs to the BPG-independent phosphoglycerate mutase family. Monomer. It depends on Mn(2+) as a cofactor.

The enzyme catalyses (2R)-2-phosphoglycerate = (2R)-3-phosphoglycerate. It functions in the pathway carbohydrate degradation; glycolysis; pyruvate from D-glyceraldehyde 3-phosphate: step 3/5. Its function is as follows. Catalyzes the interconversion of 2-phosphoglycerate and 3-phosphoglycerate. The protein is 2,3-bisphosphoglycerate-independent phosphoglycerate mutase of Nostoc punctiforme (strain ATCC 29133 / PCC 73102).